The sequence spans 121 residues: Large ribosomal subunit protein bL19 (121 aa).

Belongs to the bacterial ribosomal protein bL19 family.

This protein is located at the 30S-50S ribosomal subunit interface and may play a role in the structure and function of the aminoacyl-tRNA binding site. In Legionella pneumophila (strain Paris), this protein is Large ribosomal subunit protein bL19.